Consider the following 272-residue polypeptide: MFGYFYNSSFRRYATLMGDLFSNIQIKRQLESGDKFIRVPITYASKEHFMMKLNKWTSINSQEDVAKVETILPRINLHLVDFSYNAPFKTNILNQNLLQKGATSVVSQYNPSPIKMIYELSIFTRYEDDMFQIVEQILPYFQPHFNTTMYEQFGNDIPFKRDIKIVLMSAAIDEAIDGDNLSRRRIEWSLTFEVNGWMYPPVDDAEGLIRTTYTDFHANTRDLPDGEGVFESVDSEVVPRDIDPEDWDGTVKQTFTSNVNRPTPPEPPGPRT.

The segment at 240-272 is disordered; it reads RDIDPEDWDGTVKQTFTSNVNRPTPPEPPGPRT. The segment covering 251-260 has biased composition (polar residues); it reads VKQTFTSNVN. Residues 262–272 are compositionally biased toward pro residues; sequence PTPPEPPGPRT.

In terms of assembly, hexamer. Interacts with gp3 and gp18 on the bottom part of the hexamer. Interacts with gp13 and gp14 on the top part of the hexamer.

The protein resides in the virion. Its function is as follows. Stabilizes the tail sheath structure and acts as a connector between the end of tail and the portal vertex of the capsid. The polypeptide is Tail completion protein gp15 (15) (Enterobacteria phage T4 (Bacteriophage T4)).